The following is a 336-amino-acid chain: GTPase Obg (336 aa).

The Obg domain occupies 1 to 159; it reads MKFLDETKVY…KTIWLRLKLI (159 aa). One can recognise an OBG-type G domain in the interval 160 to 327; that stretch reads ADAGLVGLPN…TLRALRSVID (168 aa). GTP is bound by residues 166-173, 191-195, 212-215, 279-282, and 308-310; these read GLPNAGKS, FTTLH, DIPG, SQID, and SAV. Mg(2+) contacts are provided by Ser173 and Thr193.

Belongs to the TRAFAC class OBG-HflX-like GTPase superfamily. OBG GTPase family. As to quaternary structure, monomer. Mg(2+) serves as cofactor.

It localises to the cytoplasm. An essential GTPase which binds GTP, GDP and possibly (p)ppGpp with moderate affinity, with high nucleotide exchange rates and a fairly low GTP hydrolysis rate. Plays a role in control of the cell cycle, stress response, ribosome biogenesis and in those bacteria that undergo differentiation, in morphogenesis control. The polypeptide is GTPase Obg (Sinorhizobium medicae (strain WSM419) (Ensifer medicae)).